The following is a 317-amino-acid chain: MDLAYLPSPSTGVLHLGPIPLRAYAFCIILGVFAAVWLGNRRWVARGGKQGVIADVTLWAVPFGLVGGRLYHVFTSPDAYFGERGEPVRALYVWEGGLGIWGAIALGAVGAWIGCRRHRIPLPAFADAVAPGIVLAQAIGRWGNWFNQELYGRPTTLPWGLEIDRAHRPAGTLDIATYHPTFLYESLWNIGVAALILWAAKRFPLGHGRTFALYVAAYTVGRFGTEYLRIDEAHTFLGLRLNNWTSVLVFLGAVACLVVSAHRHPGIENVARLQGAGADGRTDDPRPADASVGLASGPPGNSTPRRATESWNVRNRS.

Helical transmembrane passes span 19–39 (IPLRAYAFCIILGVFAAVWLG), 51–71 (GVIADVTLWAVPFGLVGGRLY), 93–113 (VWEGGLGIWGAIALGAVGAWI), and 120–140 (IPLPAFADAVAPGIVLAQAIG). Arginine 141 is a binding site for a 1,2-diacyl-sn-glycero-3-phospho-(1'-sn-glycerol). The next 3 membrane-spanning stretches (helical) occupy residues 180 to 200 (PTFLYESLWNIGVAALILWAA), 211 to 230 (FALYVAAYTVGRFGTEYLRI), and 241 to 261 (LNNWTSVLVFLGAVACLVVSA). The segment at 275 to 317 (GAGADGRTDDPRPADASVGLASGPPGNSTPRRATESWNVRNRS) is disordered. The segment covering 299–317 (PGNSTPRRATESWNVRNRS) has biased composition (polar residues).

It belongs to the Lgt family.

The protein resides in the cell membrane. It carries out the reaction L-cysteinyl-[prolipoprotein] + a 1,2-diacyl-sn-glycero-3-phospho-(1'-sn-glycerol) = an S-1,2-diacyl-sn-glyceryl-L-cysteinyl-[prolipoprotein] + sn-glycerol 1-phosphate + H(+). It functions in the pathway protein modification; lipoprotein biosynthesis (diacylglyceryl transfer). Catalyzes the transfer of the diacylglyceryl group from phosphatidylglycerol to the sulfhydryl group of the N-terminal cysteine of a prolipoprotein, the first step in the formation of mature lipoproteins. This is Phosphatidylglycerol--prolipoprotein diacylglyceryl transferase 2 from Streptomyces coelicolor (strain ATCC BAA-471 / A3(2) / M145).